The primary structure comprises 859 residues: Paladin (859 aa).

Residues 1-34 form a disordered region; it reads MGTTASTAQQTVSAGTSLEGLQGGSSSSMDSQHS. Glycine 2 carries N-myristoyl glycine lipidation. Serine 89 bears the Phosphoserine mark.

Belongs to the paladin family. Vascular expression detected in the central nervous system, kidney, lung, heart, skeletal muscle, white adipose tissue (WAT), brown adipose tissue, liver, pancreas and spleen. Not expressed in all vessels: for instance, not expressed in capillaries in the brain, and expressed mainly in large vessels in the heart, WAT, liver, pancreas and kidney. Predominant nonvascular expression in myocardium and lung mesenchyme. In large vessels, primarily expressed by smooth muscle cells, but occasionally detected at low levels in the endothelium. Expressed in various cells of the hematopoietic lineage.

The protein resides in the cytoplasm. It localises to the cytosol. This is Paladin (Pald1) from Mus musculus (Mouse).